The following is a 341-amino-acid chain: GTPase Obg (341 aa).

The Obg domain occupies 1–159 (MKFVDEALIK…RNLRLELRVL (159 aa)). The tract at residues 128–150 (TRYKSSVNRSPRQTTPGSPGESR) is disordered. The segment covering 129-144 (RYKSSVNRSPRQTTPG) has biased composition (polar residues). The OBG-type G domain maps to 160–334 (ADVGLLGLPN…LCYALMQLID (175 aa)). GTP is bound by residues 166 to 173 (GLPNAGKS), 191 to 195 (FTTLH), 213 to 216 (DIPG), 283 to 286 (NKID), and 315 to 317 (SAI). The Mg(2+) site is built by S173 and T193.

This sequence belongs to the TRAFAC class OBG-HflX-like GTPase superfamily. OBG GTPase family. Monomer. It depends on Mg(2+) as a cofactor.

The protein resides in the cytoplasm. Functionally, an essential GTPase which binds GTP, GDP and possibly (p)ppGpp with moderate affinity, with high nucleotide exchange rates and a fairly low GTP hydrolysis rate. Plays a role in control of the cell cycle, stress response, ribosome biogenesis and in those bacteria that undergo differentiation, in morphogenesis control. This Legionella pneumophila (strain Paris) protein is GTPase Obg.